The primary structure comprises 417 residues: Signal recognition particle receptor FtsY (417 aa).

GTP contacts are provided by residues 228-235 (GINGTGKT), 310-314 (DTAGR), and 368-371 (TKID).

This sequence belongs to the GTP-binding SRP family. FtsY subfamily. As to quaternary structure, part of the signal recognition particle protein translocation system, which is composed of SRP and FtsY.

The protein resides in the cell membrane. It is found in the cytoplasm. It catalyses the reaction GTP + H2O = GDP + phosphate + H(+). Involved in targeting and insertion of nascent membrane proteins into the cytoplasmic membrane. Acts as a receptor for the complex formed by the signal recognition particle (SRP) and the ribosome-nascent chain (RNC). The protein is Signal recognition particle receptor FtsY of Methanosarcina acetivorans (strain ATCC 35395 / DSM 2834 / JCM 12185 / C2A).